We begin with the raw amino-acid sequence, 387 residues long: TSC22 domain family protein 4 (387 aa).

Disordered regions lie at residues 1 to 85 (MSGG…GEPY) and 135 to 232 (ISTP…RRDG). Residues 31–51 (PVPPALAGPPPRLPNGDPNPD) show a composition bias toward pro residues. Threonine 57 carries the phosphothreonine modification. Serine 62 and serine 165 each carry phosphoserine. Threonine 183 bears the Phosphothreonine mark. Residues serine 187, serine 189, and serine 219 each carry the phosphoserine modification. Threonine 223 carries the phosphothreonine modification. Phosphoserine is present on residues serine 254, serine 258, and serine 271. The tract at residues 336–357 (LKEQIRDLAERNAALEQENGLL) is leucine-zipper. The residue at position 362 (serine 362) is a Phosphoserine. Positions 368–387 (QLPSSGLPRLGPSAPNGPSI) are disordered.

Belongs to the TSC-22/Dip/Bun family. As to quaternary structure, forms a homodimer or heterodimer. Forms a heterodimer with TSC22D1 isoforms 1 and 2. Interacts with NRBP1. As to expression, expressed in the liver (at protein level). Expressed in Purkinje cells and proliferating cerebellar granular neurons (at protein level). Expressed in the cortex, medulla and papilla of the kidney.

The protein resides in the nucleus. The protein localises to the cytoplasm. It localises to the cell projection. Its subcellular location is the dendrite. It is found in the synapse. Binds DNA and acts as a transcriptional repressor. Involved in the regulation of systematic glucose homeostasis and insulin sensitivity, via transcriptional repression of downstream insulin signaling targets such as OBP2A/LCN13. Acts as a negative regulator of lipogenic gene expression in hepatocytes and thereby mediates the control of very low-density lipoprotein release. May play a role in neurite elongation and survival. In Mus musculus (Mouse), this protein is TSC22 domain family protein 4.